Reading from the N-terminus, the 271-residue chain is 4-hydroxy-tetrahydrodipicolinate reductase (271 aa).

NAD(+) is bound by residues 11 to 16 (GGSGRM) and Glu37. Arg38 lines the NADP(+) pocket. Residues 101-103 (GTT) and 125-128 (APNM) each bind NAD(+). His158 (proton donor/acceptor) is an active-site residue. His159 contributes to the (S)-2,3,4,5-tetrahydrodipicolinate binding site. The Proton donor role is filled by Lys162. 168–169 (GT) lines the (S)-2,3,4,5-tetrahydrodipicolinate pocket.

The protein belongs to the DapB family.

It localises to the cytoplasm. The enzyme catalyses (S)-2,3,4,5-tetrahydrodipicolinate + NAD(+) + H2O = (2S,4S)-4-hydroxy-2,3,4,5-tetrahydrodipicolinate + NADH + H(+). It carries out the reaction (S)-2,3,4,5-tetrahydrodipicolinate + NADP(+) + H2O = (2S,4S)-4-hydroxy-2,3,4,5-tetrahydrodipicolinate + NADPH + H(+). It participates in amino-acid biosynthesis; L-lysine biosynthesis via DAP pathway; (S)-tetrahydrodipicolinate from L-aspartate: step 4/4. Catalyzes the conversion of 4-hydroxy-tetrahydrodipicolinate (HTPA) to tetrahydrodipicolinate. The sequence is that of 4-hydroxy-tetrahydrodipicolinate reductase from Shewanella piezotolerans (strain WP3 / JCM 13877).